The chain runs to 466 residues: Asparagine--tRNA ligase (466 aa).

Belongs to the class-II aminoacyl-tRNA synthetase family. Homodimer.

It localises to the cytoplasm. The catalysed reaction is tRNA(Asn) + L-asparagine + ATP = L-asparaginyl-tRNA(Asn) + AMP + diphosphate + H(+). The chain is Asparagine--tRNA ligase from Shewanella baltica (strain OS185).